Reading from the N-terminus, the 173-residue chain is Adenine phosphoribosyltransferase (173 aa).

Belongs to the purine/pyrimidine phosphoribosyltransferase family. In terms of assembly, homodimer.

The protein resides in the cytoplasm. The catalysed reaction is AMP + diphosphate = 5-phospho-alpha-D-ribose 1-diphosphate + adenine. Its pathway is purine metabolism; AMP biosynthesis via salvage pathway; AMP from adenine: step 1/1. Functionally, catalyzes a salvage reaction resulting in the formation of AMP, that is energically less costly than de novo synthesis. This is Adenine phosphoribosyltransferase from Thermoanaerobacter pseudethanolicus (strain ATCC 33223 / 39E) (Clostridium thermohydrosulfuricum).